A 287-amino-acid polypeptide reads, in one-letter code: MDNSVYQVYEDEIQLLEEEIKLLSDKYEDIQQESTFFSDEEVLMSVKLFQREFLEEHKGHGPPLDLKAELESLQRDLSFLVKFTGIQITSHSKKTLEKTGNRTVQKHRLSGNCQSLPFSLEFQLLEVQNKENVSAAITDLSIAIESGQHSELSKFVSRAEENGNLLMFFRNLSSYAEWCEHRRCTFLHFKAKYPNIVTLPEGQEGDHIILRNPQLPGFELMIVWKMHIDEEGTTTPVLDLLPKVPQQALEQKKASIDNAPACFRSMLLLFGIETAIENLIQVVGLEK.

Residues 1-37 (MDNSVYQVYEDEIQLLEEEIKLLSDKYEDIQQESTFF) adopt a coiled-coil conformation.

It belongs to the CENP-P/CTF19 family. Component of the CENPA-HI complex, at least composed of CENPH, CENPI, CENPK, CENPL, CENPM, CENPO and CENPP.

The protein localises to the nucleus. It is found in the chromosome. It localises to the centromere. Functionally, component of the CENPA-HI complex, a centromeric complex involved in assembly of kinetochore proteins, mitotic progression and chromosome segregation. This chain is Centromere protein P (CENPP), found in Gallus gallus (Chicken).